The primary structure comprises 474 residues: tRNA-2-methylthio-N(6)-dimethylallyladenosine synthase (474 aa).

Positions 3 to 120 constitute an MTTase N-terminal domain; the sequence is KKLHIKTWGC…LPEMINSVRG (118 aa). C12, C49, C83, C157, C161, and C164 together coordinate [4Fe-4S] cluster. A Radical SAM core domain is found at 143–375; the sequence is RAEGPTAFVS…QERINQQAMA (233 aa). The TRAM domain maps to 378–441; that stretch reads RRMLGTTQRI…PNSLRGKVVR (64 aa).

Belongs to the methylthiotransferase family. MiaB subfamily. Monomer. Requires [4Fe-4S] cluster as cofactor.

Its subcellular location is the cytoplasm. The catalysed reaction is N(6)-dimethylallyladenosine(37) in tRNA + (sulfur carrier)-SH + AH2 + 2 S-adenosyl-L-methionine = 2-methylsulfanyl-N(6)-dimethylallyladenosine(37) in tRNA + (sulfur carrier)-H + 5'-deoxyadenosine + L-methionine + A + S-adenosyl-L-homocysteine + 2 H(+). Functionally, catalyzes the methylthiolation of N6-(dimethylallyl)adenosine (i(6)A), leading to the formation of 2-methylthio-N6-(dimethylallyl)adenosine (ms(2)i(6)A) at position 37 in tRNAs that read codons beginning with uridine. The protein is tRNA-2-methylthio-N(6)-dimethylallyladenosine synthase of Shigella boydii serotype 18 (strain CDC 3083-94 / BS512).